An 804-amino-acid polypeptide reads, in one-letter code: Endoplasmin (804 aa).

The N-terminal stretch at 1–21 (MRVLWVLGLCCVLLTFGFVRA) is a signal peptide. The SRT pseudosubstrate motif signature appears at 42–44 (SRT). N-linked (GlcNAc...) asparagine glycosylation is present at Asn62. Ser64 carries the phosphoserine modification. Asn107 carries an N-linked (GlcNAc...) asparagine glycan. Asn107, Asp149, and Asn162 together coordinate ATP. An N6-(2-hydroxyisobutyryl)lysine modification is found at Lys168. Residue Ser172 is modified to Phosphoserine. ATP is bound at residue Phe199. Asn217 carries N-linked (GlcNAc...) asparagine glycosylation. Positions 288–323 (TVEEPLEEDETAQEEKEEADDEAAVEEEEEEKKPKT) are disordered. A compositionally biased stretch (acidic residues) spans 289–317 (VEEPLEEDETAQEEKEEADDEAAVEEEEE). Position 403 is a phosphoserine (Ser403). An N6-succinyllysine modification is found at Lys404. The N-linked (GlcNAc...) asparagine glycan is linked to Asn445. Ser447 carries the phosphoserine modification. Lys479 carries the post-translational modification N6-acetyllysine. Asn481 and Asn502 each carry an N-linked (GlcNAc...) asparagine glycan. At Lys633 the chain carries N6-succinyllysine. The tract at residues 749–804 (IDPEAQVEEEPEEEPEDTTEDTTDDSEQDEEETDAGAEEEEEEQETEKEPTEKDEL) is disordered. Residues 753 to 794 (AQVEEEPEEEPEDTTEDTTDDSEQDEEETDAGAEEEEEEQET) are compositionally biased toward acidic residues. Positions 795 to 804 (EKEPTEKDEL) are enriched in basic and acidic residues. Positions 801-804 (KDEL) match the Prevents secretion from ER motif.

Belongs to the heat shock protein 90 family. As to quaternary structure, homodimer; disulfide-linked. Component of an EIF2 complex at least composed of CELF1/CUGBP1, CALR, CALR3, EIF2S1, EIF2S2, HSP90B1 and HSPA5. Part of a large chaperone multiprotein complex comprising DNAJB11, HSP90B1, HSPA5, HYOU, PDIA2, PDIA4, PDIA6, PPIB, SDF2L1, UGGT1 and very small amounts of ERP29, but not, or at very low levels, CALR nor CANX. Interacts with AIMP1; regulates its retention in the endoplasmic reticulum. Hyperglycosylated form interacts with OS9; promoting its degradation by the endoplasmic reticulum associated degradation (ERAD). Interacts with CNPY3. This interaction is disrupted in the presence of ATP. Interacts with TLR4 and TLR9, but not with TLR3. Interacts with MZB1 in a calcium-dependent manner. Interacts with METTL23. Interacts with IL1B; the interaction facilitates cargo translocation into the ERGIC. Interacts with EIF2AK3. In terms of processing, phosphorylated by CK2. N-glycosylated cotranslationally at Asn-217 by STT3A-containing OST-A complex: this glycosylation is constitutive. In response to various stress, 5 additional facultative sites (Asn-62, Asn-107, Asn-445, Asn-481 and Asn-502) can be glycosylated post-translationally by STT3B-containing OST-B complex, leading to a hyperglycosylated form that is degraded by the ER-associated degradation (ERAD) pathway. In normal conditions, the OST-A complex together with CCDC134 prevent glycosylation at facultative sites during protein folding, thereby preventing hyperglycosylation. Mechanistically, nascent HSP90B1 is tethered during translation to a specialized CCDC134-containing translocon that forms a microenvironment for its folding, in which STT3A associates with the SRT pseudosubstrate motif, and prevents access to facultative glycosylation sites until folding is completed, rendering its facultative sites inaccessible to the OST-B complex.

It is found in the endoplasmic reticulum lumen. The protein localises to the sarcoplasmic reticulum lumen. Its subcellular location is the melanosome. It carries out the reaction ATP + H2O = ADP + phosphate + H(+). Its function is as follows. ATP-dependent chaperone involved in the processing of proteins in the endoplasmic reticulum, regulating their transport. Together with MESD, acts as a modulator of the Wnt pathway by promoting the folding of LRP6, a coreceptor of the canonical Wnt pathway. When associated with CNPY3, required for proper folding of Toll-like receptors. Promotes folding and trafficking of TLR4 to the cell surface. May participate in the unfolding of cytosolic leaderless cargos (lacking the secretion signal sequence) such as the interleukin 1/IL-1 to facilitate their translocation into the ERGIC (endoplasmic reticulum-Golgi intermediate compartment) and secretion; the translocation process is mediated by the cargo receptor TMED10. In Rattus norvegicus (Rat), this protein is Endoplasmin.